A 593-amino-acid chain; its full sequence is Arginine--tRNA ligase (593 aa).

Positions 138 to 148 (ANPTGPLHVGH) match the 'HIGH' region motif.

Belongs to the class-I aminoacyl-tRNA synthetase family. Monomer.

It localises to the cytoplasm. The catalysed reaction is tRNA(Arg) + L-arginine + ATP = L-arginyl-tRNA(Arg) + AMP + diphosphate. The protein is Arginine--tRNA ligase of Burkholderia lata (strain ATCC 17760 / DSM 23089 / LMG 22485 / NCIMB 9086 / R18194 / 383).